A 530-amino-acid chain; its full sequence is Portal protein (530 aa).

It belongs to the siphoviridae portal protein family. As to quaternary structure, homododecamer. Interacts with the terminase complex composed of two small and one large terminase subunits. Proteolytically cleaved by the viral protease during capsid maturation.

It localises to the virion. Functionally, forms the portal vertex of the capsid. This portal plays critical roles in head assembly, genome packaging, neck/tail attachment, and genome ejection. The portal protein multimerizes as a single ring-shaped homododecamer arranged around a central channel. Binds to the terminase subunits to form the packaging machine. The protein is Portal protein of Escherichia phage N15 (Bacteriophage N15).